The sequence spans 75 residues: uncharacterized protein (75 aa).

Residues 1–14 are compositionally biased toward low complexity; that stretch reads MNDNNDNNNNNKNI. The interval 1-30 is disordered; it reads MNDNNDNNNNNKNIDNVDDDNDDNDKGKYK.

This is an uncharacterized protein from Dictyostelium discoideum (Social amoeba).